We begin with the raw amino-acid sequence, 202 residues long: FMN-dependent NADH:quinone oxidoreductase (202 aa).

FMN-binding positions include Ser12 and 21–23 (SFS).

It belongs to the azoreductase type 1 family. As to quaternary structure, homodimer. FMN serves as cofactor.

The enzyme catalyses 2 a quinone + NADH + H(+) = 2 a 1,4-benzosemiquinone + NAD(+). The catalysed reaction is N,N-dimethyl-1,4-phenylenediamine + anthranilate + 2 NAD(+) = 2-(4-dimethylaminophenyl)diazenylbenzoate + 2 NADH + 2 H(+). Functionally, quinone reductase that provides resistance to thiol-specific stress caused by electrophilic quinones. Also exhibits azoreductase activity. Catalyzes the reductive cleavage of the azo bond in aromatic azo compounds to the corresponding amines. The protein is FMN-dependent NADH:quinone oxidoreductase of Mycoplasma mobile (strain ATCC 43663 / 163K / NCTC 11711) (Mesomycoplasma mobile).